Consider the following 309-residue polypeptide: Glutaminase (309 aa).

Substrate is bound by residues S65, N117, E162, N169, Y193, Y245, and V263.

The protein belongs to the glutaminase family. Homotetramer.

It catalyses the reaction L-glutamine + H2O = L-glutamate + NH4(+). In Bacillus cereus (strain ATCC 10987 / NRS 248), this protein is Glutaminase.